A 289-amino-acid chain; its full sequence is Rhodopsin (289 aa).

The Extracellular portion of the chain corresponds to 1–7 (YLVSPAG). Residues 8–32 (YAALGAYMFLLILVGFPVNFLTLYV) traverse the membrane as a helical segment. Residues 33–44 (TLEHKKLRTPLN) are Cytoplasmic-facing. A helical membrane pass occupies residues 45–67 (YILLNLAVADLFMVLGGFTTTMY). The Extracellular segment spans residues 68–81 (TSMHGYFVLGRLGC). A disulfide bond links cysteine 81 and cysteine 158. A helical membrane pass occupies residues 82-104 (NLEGFFVTLGGEIALWSLVVLAI). Positions 105-107 (ERW) match the 'Ionic lock' involved in activated form stabilization motif. Over 105-123 (ERWIGVFKSIRNFRFTEDH) the chain is Cytoplasmic. Residues 124–144 (AIMGLGFSWVMAATCAVPPLV) traverse the membrane as a helical segment. Topologically, residues 145–173 (GWLRYIPEGMQCSCGVDYYTRAEGFNNES) are extracellular. N-linked (GlcNAc...) asparagine glycosylation occurs at asparagine 171. Residues 174-195 (FVIYMFIVHFLIPLIVIFFCYG) traverse the membrane as a helical segment. Topologically, residues 196–223 (RLLCAVKEAAAAQQESETTQRAEKEVSR) are cytoplasmic. Residues 224 to 245 (MVVIMVIGYLVCWLPYASVAWW) traverse the membrane as a helical segment. Over 246–257 (IFCNQGSEFGPI) the chain is Extracellular. A helical transmembrane segment spans residues 258 to 279 (FMTLPAFFAKSPAIYNPLIYIC). Lysine 267 carries the N6-(retinylidene)lysine modification. The Cytoplasmic portion of the chain corresponds to 280–289 (MNKQFPHCMI).

The protein belongs to the G-protein coupled receptor 1 family. Opsin subfamily. Phosphorylated on some or all of the serine and threonine residues present in the C-terminal region. Post-translationally, contains one covalently linked retinal chromophore.

The protein localises to the membrane. It localises to the cell projection. It is found in the cilium. Its subcellular location is the photoreceptor outer segment. Photoreceptor required for image-forming vision at low light intensity. While most salt water fish species use retinal as chromophore, most freshwater fish use 3-dehydroretinal, or a mixture of retinal and 3-dehydroretinal. Light-induced isomerization of 11-cis to all-trans retinal triggers a conformational change that activates signaling via G-proteins. Subsequent receptor phosphorylation mediates displacement of the bound G-protein alpha subunit by arrestin and terminates signaling. This is Rhodopsin (rho) from Leocottus kesslerii (Kessler's sculpin).